A 331-amino-acid chain; its full sequence is GTP 3',8-cyclase (331 aa).

In terms of domain architecture, Radical SAM core spans 9–233; that stretch reads SFGRQVTYVR…TATNEHTGGP (225 aa). Arg-18 serves as a coordination point for GTP. [4Fe-4S] cluster contacts are provided by Cys-25 and Cys-29. Tyr-31 lines the S-adenosyl-L-methionine pocket. Position 32 (Cys-32) interacts with [4Fe-4S] cluster. Arg-67 contacts GTP. Gly-71 serves as a coordination point for S-adenosyl-L-methionine. Thr-98 is a GTP binding site. An S-adenosyl-L-methionine-binding site is contributed by Ser-122. GTP is bound at residue Lys-159. An S-adenosyl-L-methionine-binding site is contributed by Met-193. 2 residues coordinate [4Fe-4S] cluster: Cys-257 and Cys-260. 262 to 264 is a GTP binding site; sequence RVR. Residue Cys-274 coordinates [4Fe-4S] cluster.

It belongs to the radical SAM superfamily. MoaA family. Monomer and homodimer. Requires [4Fe-4S] cluster as cofactor.

It catalyses the reaction GTP + AH2 + S-adenosyl-L-methionine = (8S)-3',8-cyclo-7,8-dihydroguanosine 5'-triphosphate + 5'-deoxyadenosine + L-methionine + A + H(+). Its pathway is cofactor biosynthesis; molybdopterin biosynthesis. Catalyzes the cyclization of GTP to (8S)-3',8-cyclo-7,8-dihydroguanosine 5'-triphosphate. The sequence is that of GTP 3',8-cyclase from Saccharophagus degradans (strain 2-40 / ATCC 43961 / DSM 17024).